The primary structure comprises 525 residues: MSKNIHKHRILILDFGSQYTQLIARRVREIGVYCELWAWDVTEEQIREFNPDGIILSGGPESVTESDSPRAPEYVFNAGVPVLGVCYGMQTMAEQLGGKVESSDKREFGYAKVKLVKDSELFHNIEDAITEDGRPELDVWMSHGDKVMEIPVDFVTIAVTPTCPHAAMANEAKRFYGVQFHPEVTHTVQGARMLERFVKEICHCEALWTPATIIEDAVARIREQVGTDEVILGLSGGVDSSVVAMLIHRAVGKQLTCVFVDNGLLRLNEGQQVMEMFGDHFGLNIIKVDAEERFLSALKGIADPELKRKAIGRVFVEVFDDESKKLKNAKWLAQGTIYPDVIESAASKTGKAHVIKSHHNVGGLPDDMKMGLVEPLRELFKDEVRRVGLELGLPYNMLYRHPFPGPGLGVRVLGEVKKEYCDLLRRADAIFIEELHNADLYNKVSQAFTVFLPVRSVGVMGDGRKYDWVVSLRAVETIDFMTAHWAHLPYDFLGHVSNRIINEINGISRVVYDISGKPPATIEWE.

The Glutamine amidotransferase type-1 domain maps to 9–207; that stretch reads RILILDFGSQ…VKEICHCEAL (199 aa). Cys-86 acts as the Nucleophile in catalysis. Residues His-181 and Glu-183 contribute to the active site. The GMPS ATP-PPase domain occupies 208–400; it reads WTPATIIEDA…LGLPYNMLYR (193 aa). 235-241 is a binding site for ATP; the sequence is SGGVDSS.

Homodimer.

The catalysed reaction is XMP + L-glutamine + ATP + H2O = GMP + L-glutamate + AMP + diphosphate + 2 H(+). Its pathway is purine metabolism; GMP biosynthesis; GMP from XMP (L-Gln route): step 1/1. Functionally, catalyzes the synthesis of GMP from XMP. The sequence is that of GMP synthase [glutamine-hydrolyzing] from Tolumonas auensis (strain DSM 9187 / NBRC 110442 / TA 4).